A 601-amino-acid polypeptide reads, in one-letter code: ATP-dependent lipid A-core flippase (601 aa).

The ABC transmembrane type-1 domain occupies Leu-28–Arg-328. A run of 6 helical transmembrane segments spans residues Cys-32–Ile-52, Val-81–Phe-101, Ala-160–Tyr-180, Trp-183–Val-203, Ala-267–Ala-287, and Asp-296–Ile-316. The region spanning Leu-360–Met-597 is the ABC transporter domain. Gly-394–Ser-401 contributes to the ATP binding site.

This sequence belongs to the ABC transporter superfamily. Lipid exporter (TC 3.A.1.106) family. In terms of assembly, homodimer.

The protein resides in the cell inner membrane. It catalyses the reaction ATP + H2O + lipid A-core oligosaccharideSide 1 = ADP + phosphate + lipid A-core oligosaccharideSide 2.. Involved in lipopolysaccharide (LPS) biosynthesis. Translocates lipid A-core from the inner to the outer leaflet of the inner membrane. Transmembrane domains (TMD) form a pore in the inner membrane and the ATP-binding domain (NBD) is responsible for energy generation. The chain is ATP-dependent lipid A-core flippase from Shewanella sp. (strain MR-4).